The sequence spans 257 residues: Glutamate racemase (257 aa).

Substrate-binding positions include 12–13 and 44–45; these read DS and YG. Cysteine 75 (proton donor/acceptor) is an active-site residue. 76–77 is a substrate binding site; sequence NT. Cysteine 176 (proton donor/acceptor) is an active-site residue. Residue 177 to 178 coordinates substrate; that stretch reads TH.

This sequence belongs to the aspartate/glutamate racemases family.

The catalysed reaction is L-glutamate = D-glutamate. It participates in cell wall biogenesis; peptidoglycan biosynthesis. In terms of biological role, provides the (R)-glutamate required for cell wall biosynthesis. This chain is Glutamate racemase, found in Thermus thermophilus (strain ATCC 27634 / DSM 579 / HB8).